The chain runs to 593 residues: Serine/threonine-protein kinase PAK 4 (593 aa).

The CRIB domain maps to 11–24; sequence ISAPSNFEHRVHTG. The tract at residues 25 to 322 is linker; the sequence is FDQHEQKFTG…VVDPGDPRSY (298 aa). Ser41 is modified (phosphoserine). Lys78 carries the N6-methyllysine modification. Positions 95-303 are disordered; sequence TRSNSLRRES…PQREPQRVSH (209 aa). Ser104 is subject to Phosphoserine. Residues 118–133 show a composition bias toward basic and acidic residues; sequence LEERAAPARMAPDKAG. Residue Ser148 is modified to Phosphoserine. The segment covering 149 to 164 has biased composition (basic and acidic residues); the sequence is GDRRRVGPEKRPKSSR. Ser181 is modified (phosphoserine). Residues 184–197 show a composition bias toward polar residues; sequence DVSTPQPGSLTSGT. At Thr187 the chain carries Phosphothreonine. Position 195 is a phosphoserine (Ser195). Thr207 carries the phosphothreonine modification. The segment covering 238–258 has biased composition (low complexity); that stretch reads AAPQSSSSSRPPTRARGAPSP. Residues Ser257 and Ser266 each carry the phosphoserine modification. The segment covering 267–280 has biased composition (low complexity); it reads EPQLAPPARALAAP. A compositionally biased stretch (pro residues) spans 281-292; that stretch reads AVPPAPGPPGPR. A Phosphoserine modification is found at Ser293. Positions 294–303 are enriched in basic and acidic residues; it reads PQREPQRVSH. In terms of domain architecture, Protein kinase spans 323–574; that stretch reads LDNFIKIGEG…AAELLKHPFL (252 aa). ATP-binding positions include 329 to 337 and Lys352; that span reads IGEGSTGIV. Asp442 acts as the Proton acceptor in catalysis. A Phosphoserine; by autocatalysis modification is found at Ser476.

It belongs to the protein kinase superfamily. STE Ser/Thr protein kinase family. STE20 subfamily. Interacts tightly with GTP-bound but not GDP-bound CDC42/p21 and weakly with RAC1. Interacts with FGFR2 and GRB2. Interacts with INKA1. Interacts with SH3RF2. Interacts with RHOU and PAXI; the PAK4-RHOU complex protects RHOU from ubiquitination and acts as a scaffold to suppport paxillin/PAXI phosphorylation. In terms of processing, autophosphorylated on serine residues when activated by CDC42/p21. Phosphorylated on tyrosine residues upon stimulation of FGFR2. Methylated by SETD6. Post-translationally, polyubiquitinated, leading to its proteasomal degradation.

It localises to the cytoplasm. It carries out the reaction L-seryl-[protein] + ATP = O-phospho-L-seryl-[protein] + ADP + H(+). The catalysed reaction is L-threonyl-[protein] + ATP = O-phospho-L-threonyl-[protein] + ADP + H(+). Its activity is regulated as follows. Inhibited by INKA1; which inhibits the serine/threonine-protein kinase activity by binding PAK4 in a substrate-like manner. Functionally, serine/threonine protein kinase that plays a role in a variety of different signaling pathways including cytoskeleton regulation, cell migration, growth, proliferation or cell survival. Activation by various effectors including growth factor receptors or active CDC42 and RAC1 results in a conformational change and a subsequent autophosphorylation on several serine and/or threonine residues. Phosphorylates and inactivates the protein phosphatase SSH1, leading to increased inhibitory phosphorylation of the actin binding/depolymerizing factor cofilin. Decreased cofilin activity may lead to stabilization of actin filaments. Phosphorylates LIMK1, a kinase that also inhibits the activity of cofilin. Phosphorylates integrin beta5/ITGB5 and thus regulates cell motility. Phosphorylates ARHGEF2 and activates the downstream target RHOA that plays a role in the regulation of assembly of focal adhesions and actin stress fibers. Stimulates cell survival by phosphorylating the BCL2 antagonist of cell death BAD. Alternatively, inhibits apoptosis by preventing caspase-8 binding to death domain receptors in a kinase independent manner. Plays a role in cell-cycle progression by controlling levels of the cell-cycle regulatory protein CDKN1A and by phosphorylating RAN. Promotes kinase-independent stabilization of RHOU, thereby contributing to focal adhesion disassembly during cell migration. The protein is Serine/threonine-protein kinase PAK 4 of Mus musculus (Mouse).